We begin with the raw amino-acid sequence, 56 residues long: uncharacterized protein (56 aa).

The helical transmembrane segment at 6 to 26 (MLLIMLYMVLVVNDLILYNIL) threads the bilayer.

Its subcellular location is the membrane. This is an uncharacterized protein from Dictyostelium discoideum (Social amoeba).